Consider the following 84-residue polypeptide: Small ribosomal subunit protein bS20 (84 aa).

Positions 1–25 are disordered; the sequence is MPVIKSAMKRVRTSEKAAARNRSQM.

It belongs to the bacterial ribosomal protein bS20 family.

Binds directly to 16S ribosomal RNA. This is Small ribosomal subunit protein bS20 from Pediococcus pentosaceus (strain ATCC 25745 / CCUG 21536 / LMG 10740 / 183-1w).